The sequence spans 409 residues: Iron(III) salmochelin esterase (409 aa).

Belongs to the Fes family.

It is found in the cytoplasm. The enzyme catalyses Fe(III)-C-5-deoxy-beta-D-glucosyl-enterobactin + H2O = Fe(III)-{di[N-(2,3-dihydroxybenzoyl)-L-seryl]-N-(C-5-[deoxy-beta-D-glucosyl]-2,3-dihydroxybenzoyl)-L-serine} + H(+). It catalyses the reaction Fe(III)-{di[N-(2,3-dihydroxybenzoyl)-L-seryl]-N-(C-5-[deoxy-beta-D-glucosyl]-2,3-dihydroxybenzoyl)-L-serine} + H2O + H(+) = Fe(III)-{N-(2,3-dihydroxybenzoyl)-L-seryl-N-(C-5-[deoxy-beta-D-glucosyl]-2,3-dihydroxybenzoyl)-L-serine} + N-(2,3-dihydroxybenzoyl)-L-serine. The catalysed reaction is Fe(III)-{N-(2,3-dihydroxybenzoyl)-L-seryl-[N-(C-5-[deoxy-beta-D-glucosyl]-2,3-dihydroxybenzoyl)-L-serine]2} + H2O + H(+) = Fe(III)-{N-(2,3-dihydroxybenzoyl)-L-seryl-N-(C-5-[deoxy-beta-D-glucosyl]-2,3-dihydroxybenzoyl)-L-serine} + N-(C-5-[deoxy-beta-D-glucosyl]-2,3-dihydroxybenzoyl)-L-serine. It carries out the reaction Fe(III)-di(C-5-deoxy-beta-D-glucosyl)-enterobactin + H2O = Fe(III)-{N-(2,3-dihydroxybenzoyl)-L-seryl-[N-(C-5-[deoxy-beta-D-glucosyl]-2,3-dihydroxybenzoyl)-L-serine]2} + H(+). The enzyme catalyses Fe(III)-{N-(2,3-dihydroxybenzoyl)-L-seryl-[N-(C-5-[deoxy-beta-D-glucosyl]-2,3-dihydroxybenzoyl)-L-serine]2} + H2O + H(+) = Fe(III)-[N-(C-5-[deoxy-beta-D-glucosyl]-2,3-dihydroxybenzoyl)-L-serine]2 + N-(2,3-dihydroxybenzoyl)-L-serine. It catalyses the reaction Fe(III)-[N-(C-5-[deoxy-beta-D-glucosyl]-2,3-dihydroxybenzoyl)-L-serine]2 + H2O + H(+) = Fe(III)-[N-(C-5-[deoxy-beta-D-glucosyl]-2,3-dihydroxybenzoyl)-L-serine] + N-(C-5-[deoxy-beta-D-glucosyl]-2,3-dihydroxybenzoyl)-L-serine. In terms of biological role, catalyzes the hydrolysis of both the apo and Fe3(+)-bound forms of enterobactin (Ent), monoglucosyl-C-Ent (MGE), diglucosyl-C-Ent (DGE) and triglucosyl-C-Ent (TGE). Shows higher catalytic efficiencies on Fe3(+)-bound forms. The initial linear trimer products are, in turn, very good substrates for further hydrolytic cleavage by IroD, leading to complete degradation of the trilactone to DHB-Ser and/or Glc-DHB-Ser monomers. Hydrolyzes MGE and DGE regioselectively. May be the ferric MGE/DGE esterase responsible for cytoplasmic iron release. This Escherichia coli O6:H1 (strain CFT073 / ATCC 700928 / UPEC) protein is Iron(III) salmochelin esterase.